The following is a 458-amino-acid chain: UPF0210 protein Maeo_1412 (458 aa).

This sequence belongs to the UPF0210 family.

The protein is UPF0210 protein Maeo_1412 of Methanococcus aeolicus (strain ATCC BAA-1280 / DSM 17508 / OCM 812 / Nankai-3).